A 319-amino-acid polypeptide reads, in one-letter code: Transcriptional regulator LsrR (319 aa).

The H-T-H motif DNA-binding region spans Gln32–Gln55.

Belongs to the SorC transcriptional regulatory family.

Its subcellular location is the cytoplasm. Its activity is regulated as follows. Inactivated by phosphorylated autoinducer-2 (phospho-AI-2). Phospho-AI-2 acts by binding to LsrR, which is then unable to bind to the promoter regions, allowing the transcription of the target genes. In terms of biological role, transcriptional regulator that represses the expression of the lsr operon (lsrACDBFGE) in the absence of the quorum-sensing signaling molecule autoinducer 2 (AI-2). It also represses the expression of the lsrRK operon. Acts by binding to the intergenic region between the lsr operon and lsrR. In the presence of phosphorylated autoinducer-2 (phospho-AI-2), LsrR is inactivated, leading to the transcription of the genes. The regulatory function of LsrR was thought to be limited to the lsr operon, but it was subsequently shown to be involved, directly or indirectly, in the regulation of SPI-1 and flagella genes. It negatively regulates the expression of those genes, which reduces the ability of Salmonella to invade host cells. The protein is Transcriptional regulator LsrR of Salmonella typhimurium (strain LT2 / SGSC1412 / ATCC 700720).